The primary structure comprises 1101 residues: Translation initiation factor IF-2 (1101 aa).

2 disordered regions span residues 81–437 (QEIL…EDDF) and 452–509 (SIST…QRAE). The segment covering 93–108 (PFSSTDAPVGSGQSSP) has biased composition (polar residues). Residues 110-124 (IEPPRPPMKPQPPSP) are compositionally biased toward pro residues. Polar residues-rich tracts occupy residues 128–149 (EVTS…GSSS) and 157–184 (SPMS…QLKY). The segment covering 185–196 (NQEQSNQLEQES) has biased composition (low complexity). Polar residues predominate over residues 197-206 (AISSELSEVN). 3 stretches are compositionally biased toward basic and acidic residues: residues 228-237 (SKEKEAKSNE), 248-288 (KENK…DKKS), and 295-340 (VKRE…ELKR). Residues 361-378 (EPEDVEDTAEDLLEEDPL) show a composition bias toward acidic residues. Basic residues-rich tracts occupy residues 385-397 (PKLK…KVGK) and 414-428 (KAGK…KRRQ). Over residues 484–506 (EPGRGKSAERERSERKDRKEQPQ) the composition is skewed to basic and acidic residues. Residues 592-765 (RRPPVVTIMG…LLVAEVGELS (174 aa)) form the tr-type G domain. Residues 601–608 (GHVDHGKT) are G1. 601–608 (GHVDHGKT) is a binding site for GTP. Positions 626–630 (GITQH) are G2. A G3 region spans residues 651–654 (DTPG). Residues 651 to 655 (DTPGH) and 705 to 708 (NKID) contribute to the GTP site. The G4 stretch occupies residues 705–708 (NKID). A G5 region spans residues 741-743 (SAL).

The protein belongs to the TRAFAC class translation factor GTPase superfamily. Classic translation factor GTPase family. IF-2 subfamily.

It is found in the cytoplasm. In terms of biological role, one of the essential components for the initiation of protein synthesis. Protects formylmethionyl-tRNA from spontaneous hydrolysis and promotes its binding to the 30S ribosomal subunits. Also involved in the hydrolysis of GTP during the formation of the 70S ribosomal complex. The protein is Translation initiation factor IF-2 of Gloeothece citriformis (strain PCC 7424) (Cyanothece sp. (strain PCC 7424)).